Consider the following 526-residue polypeptide: Arylsulfatase G (526 aa).

The first 16 residues, Met-1–Ser-16, serve as a signal peptide directing secretion. 3 residues coordinate Ca(2+): Asp-44, Asp-45, and Cys-84. The Nucleophile role is filled by Cys-84. The residue at position 84 (Cys-84) is a 3-oxoalanine (Cys). N-linked (GlcNAc...) asparagine glycosylation is present at Asn-117. Lys-137 is a binding site for substrate. His-139 is an active-site residue. Ser-162 serves as a coordination point for substrate. An N-linked (GlcNAc...) asparagine glycan is attached at Asn-215. Substrate is bound at residue His-251. Residues Asp-302 and Asn-303 each coordinate Ca(2+). 2 N-linked (GlcNAc...) asparagine glycosylation sites follow: Asn-356 and Asn-497.

The protein belongs to the sulfatase family. The cofactor is Ca(2+). N-glycosylated with both high mannose and complex type sugars. In terms of processing, the conversion to 3-oxoalanine (also known as C-formylglycine, FGly), of a serine or cysteine residue in prokaryotes and of a cysteine residue in eukaryotes, is critical for catalytic activity. Post-translationally, 63-kDa precursor undergoes proteolytic processing in two steps, yielding two fragments in the first step (apparent molecular masses of 44 and 18 kDa). In the second step, the 44-kDa fragment is processed further to the 34- and 10-kDa chains. The 10-kDa chain is a cleavage product of the 44-kDa fragment but linked to the 18-kDa chain through a disulfide bridge.

It is found in the lysosome. The enzyme catalyses an aryl sulfate + H2O = a phenol + sulfate + H(+). The catalysed reaction is Hydrolysis of the 3-sulfate groups of the N-sulfo-D-glucosamine 3-O-sulfate units of heparin.. Displays arylsulfatase activity at acidic pH towards the artificial substrate p-nitrocatechol sulfate. Catalyzes the hydrolysis of the 3-sulfate groups of the N-sulfo-D-glucosamine 3-O-sulfate units of heparin. This chain is Arylsulfatase G (Arsg), found in Rattus norvegicus (Rat).